The chain runs to 370 residues: Ubiquitin carboxyl-terminal hydrolase 12 (370 aa).

The short motif at 1-4 (MEIL) is the Required for plasma membrane localization of USP12/WDR20 element. One can recognise a USP domain in the interval 39 to 369 (FGLVNFGNTC…SGYILFYQSR (331 aa)). Cys-48 acts as the Nucleophile in catalysis. The segment covering 146–157 (QEKQNGRLRNGD) has biased composition (basic and acidic residues). The interval 146–168 (QEKQNGRLRNGDVDSEDNNSTPD) is disordered. Positions 186, 189, 233, and 236 each coordinate Zn(2+). His-317 acts as the Proton acceptor in catalysis.

The protein belongs to the peptidase C19 family. USP12/USP46 subfamily. Interacts with WDR48. Interacts with WDR20; this interaction promotes translocation of the USP12 complex to the plasma membrane. Component of the USP12-WDR20-WDR48 deubiquitinating complex. Component of the USP12-DMWD-WDR48 deubiquitinating complex. Interacts with PHLPP1. Interacts with RBPJ. Interacts with CBP; this interaction blocks the acetyltransferase activity of CREBBP. Interacts with ITCH; the interaction is more efficient when both USP12 and WDR48/UAF1 are involved and may mediate recruitment of the USP12 deubiquitinating complex to Notch.

Its subcellular location is the nucleus. It is found in the cytoplasm. The protein resides in the cell membrane. The enzyme catalyses Thiol-dependent hydrolysis of ester, thioester, amide, peptide and isopeptide bonds formed by the C-terminal Gly of ubiquitin (a 76-residue protein attached to proteins as an intracellular targeting signal).. Its activity is regulated as follows. Activated by interaction with WDR20, WDR48 and DMWD through different allosteric mechanisms. Its function is as follows. Deubiquitinating enzyme that plays various roles in the regulation of the immune response and inflammation. During TCR engagement and activation, translocates into the cytoplasm and deubiquitinates its substrates LAT and TRAT1 and prevents their lysosome-dependent degradation to stabilize the TCR signaling complex at the plasma membrane. Plays an essential role in the selective LPS-induced macrophage response through the activation of NF-kappa-B pathway. In addition, promotes that antiviral immune response through targeting DNA sensor IFI16 to inhibit its proteasome-dependent degradation. Participates in the interferon signaling pathway and antiviral response independently of its deubiquitinase activity by maintaining nuclear phosphorylated STAT1 levels via inhibition of its CREBBP-mediated acetylation and subsequent dephosphorylation. Plays an intrinsic role in promoting the differentiation, activation and proliferation of CD4(+) T-cell by activating the NF-kappa-B signaling pathway through deubiquitinating and stabilizing B-cell lymphoma/leukemia 10/BCL10. In myeloid-derived suppressor cells promotes the activation of the NF-kappa-B via deubiquitination and stabilization of RELA. Regulates the 'Lys-63'-linked polyubiquitin chains of BAX and thereby modulates the mitochondrial apoptotic process. Negative regulator of NOTCH signaling that specifically deubiquitinates non-activated NOTCH receptors to target them for lysosomal degradation; deubiquitination of NOTCH stimulates its transport form late endosomes to lysosomes. Protects neurons against HTT/huntingtin-induced polyglutamine expansion-dependent neurodegeneration through regulation of autophagic flux. This function is independent of deubiquitinase activity or of other components of the USP12-WDR20-WDR48 deubiquitinating complex. In complex with WDR48, acts as a potential tumor suppressor by positively regulating PHLPP1 stability. In Rattus norvegicus (Rat), this protein is Ubiquitin carboxyl-terminal hydrolase 12.